The sequence spans 614 residues: Probable peptide-binding protein YejA (614 aa).

The N-terminal stretch at 1-27 is a signal peptide; the sequence is MILAPLKSRILIALAASALLIPAVASA.

Belongs to the bacterial solute-binding protein 5 family. In terms of assembly, the complex is composed of one ATP-binding protein (YejF), two transmembrane proteins (YejB and YejE) and a solute-binding protein (YejA).

It is found in the periplasm. Probably part of the ABC transporter complex YejABEF, which is likely involved in broad-spectrum peptide import. The sequence is that of Probable peptide-binding protein YejA from Agrobacterium fabrum (strain C58 / ATCC 33970) (Agrobacterium tumefaciens (strain C58)).